A 902-amino-acid polypeptide reads, in one-letter code: Cytosolic 10-formyltetrahydrofolate dehydrogenase (902 aa).

Residues 1-310 (MKIAVIGQSL…LASNFFKGAA (310 aa)) form a hydrolase domain region. Residue S9 is modified to Phosphoserine. K38 bears the N6-succinyllysine mark. Residue 88–90 (QFI) participates in (6R)-10-formyltetrahydrofolate binding. The active-site Proton donor is the H106. Position 142 (D142) interacts with (6R)-10-formyltetrahydrofolate. In terms of domain architecture, Carrier spans 318 to 395 (EAELVTAEAV…DFIQLLVRKL (78 aa)). S354 is modified (O-(pantetheine 4'-phosphoryl)serine). Residues 417-902 (TIRIPHQLFI…LRVKTVTFEY (486 aa)) are aldehyde dehydrogenase domain. Residues 571–573 (IPW) and 597–600 (KPAQ) contribute to the NADP(+) site. S629 and S631 each carry phosphoserine. Residues 630–635 (GSLVGQ) and 650–651 (GS) contribute to the NADP(+) site. Residue K660 is modified to N6-succinyllysine. Catalysis depends on E673, which acts as the Proton acceptor. 673–674 (EL) serves as a coordination point for NADP(+). Residue C707 is the Proton donor of the active site. K757 contacts NADP(+). K767 is subject to N6-succinyllysine. 804–806 (ESF) lines the NADP(+) pocket. S825 is subject to Phosphoserine. The residue at position 882 (K882) is an N6-acetyllysine.

It in the N-terminal section; belongs to the GART family. The protein in the C-terminal section; belongs to the aldehyde dehydrogenase family. ALDH1L subfamily. Homotetramer. In terms of processing, phosphopantetheinylation at Ser-354 by AASDHPPT is required for the formyltetrahydrofolate dehydrogenase activity.

It is found in the cytoplasm. The protein resides in the cytosol. The catalysed reaction is (6R)-10-formyltetrahydrofolate + NADP(+) + H2O = (6S)-5,6,7,8-tetrahydrofolate + CO2 + NADPH + H(+). Its function is as follows. Cytosolic 10-formyltetrahydrofolate dehydrogenase that catalyzes the NADP(+)-dependent conversion of 10-formyltetrahydrofolate to tetrahydrofolate and carbon dioxide. May also have an NADP(+)-dependent aldehyde dehydrogenase activity towards formaldehyde, acetaldehyde, propionaldehyde, and benzaldehyde. The protein is Cytosolic 10-formyltetrahydrofolate dehydrogenase of Pongo abelii (Sumatran orangutan).